Here is a 556-residue protein sequence, read N- to C-terminus: Glucose-6-phosphate isomerase (556 aa).

E360 acts as the Proton donor in catalysis. Catalysis depends on residues H391 and K519.

It belongs to the GPI family.

The protein localises to the cytoplasm. It carries out the reaction alpha-D-glucose 6-phosphate = beta-D-fructose 6-phosphate. The protein operates within carbohydrate biosynthesis; gluconeogenesis. It participates in carbohydrate degradation; glycolysis; D-glyceraldehyde 3-phosphate and glycerone phosphate from D-glucose: step 2/4. Catalyzes the reversible isomerization of glucose-6-phosphate to fructose-6-phosphate. This Acinetobacter baumannii (strain ATCC 17978 / DSM 105126 / CIP 53.77 / LMG 1025 / NCDC KC755 / 5377) protein is Glucose-6-phosphate isomerase.